Reading from the N-terminus, the 510-residue chain is Probable cytosol aminopeptidase (510 aa).

Residues Lys272 and Asp277 each contribute to the Mn(2+) site. The active site involves Lys284. The Mn(2+) site is built by Asp296, Asp355, and Glu357. Arg359 is an active-site residue.

The protein belongs to the peptidase M17 family. Requires Mn(2+) as cofactor.

It localises to the cytoplasm. It carries out the reaction Release of an N-terminal amino acid, Xaa-|-Yaa-, in which Xaa is preferably Leu, but may be other amino acids including Pro although not Arg or Lys, and Yaa may be Pro. Amino acid amides and methyl esters are also readily hydrolyzed, but rates on arylamides are exceedingly low.. The catalysed reaction is Release of an N-terminal amino acid, preferentially leucine, but not glutamic or aspartic acids.. Functionally, presumably involved in the processing and regular turnover of intracellular proteins. Catalyzes the removal of unsubstituted N-terminal amino acids from various peptides. This Synechococcus sp. (strain JA-2-3B'a(2-13)) (Cyanobacteria bacterium Yellowstone B-Prime) protein is Probable cytosol aminopeptidase.